The primary structure comprises 207 residues: Cytochrome c biogenesis ATP-binding export protein CcmA (207 aa).

An ABC transporter domain is found at 4–207 (LEVRELLCER…RISLTQTRAV (204 aa)). 36 to 43 (GSNGAGKT) lines the ATP pocket.

Belongs to the ABC transporter superfamily. CcmA exporter (TC 3.A.1.107) family. In terms of assembly, the complex is composed of two ATP-binding proteins (CcmA) and two transmembrane proteins (CcmB).

The protein localises to the cell inner membrane. It catalyses the reaction heme b(in) + ATP + H2O = heme b(out) + ADP + phosphate + H(+). In terms of biological role, part of the ABC transporter complex CcmAB involved in the biogenesis of c-type cytochromes; once thought to export heme, this seems not to be the case, but its exact role is uncertain. Responsible for energy coupling to the transport system. The polypeptide is Cytochrome c biogenesis ATP-binding export protein CcmA (Escherichia coli O157:H7).